Reading from the N-terminus, the 86-residue chain is Large ribosomal subunit protein uL23 (86 aa).

The protein belongs to the universal ribosomal protein uL23 family. As to quaternary structure, part of the 50S ribosomal subunit. Contacts protein L29.

Its function is as follows. Binds to 23S rRNA. One of the proteins that surrounds the polypeptide exit tunnel on the outside of the ribosome. This chain is Large ribosomal subunit protein uL23, found in Methanococcus maripaludis (strain DSM 14266 / JCM 13030 / NBRC 101832 / S2 / LL).